We begin with the raw amino-acid sequence, 358 residues long: Probable isocitrate dehydrogenase [NAD] subunit alpha, mitochondrial (358 aa).

The substrate site is built by R108, R118, R139, and D226. Residues D226, D250, and D254 each coordinate Mg(2+).

Belongs to the isocitrate and isopropylmalate dehydrogenases family. Heterooligomer of subunits alpha, beta, and gamma in the apparent ratio of 2:1:1. Requires Mg(2+) as cofactor. It depends on Mn(2+) as a cofactor.

It is found in the mitochondrion. The catalysed reaction is D-threo-isocitrate + NAD(+) = 2-oxoglutarate + CO2 + NADH. This is Probable isocitrate dehydrogenase [NAD] subunit alpha, mitochondrial (idha-1) from Caenorhabditis elegans.